The following is a 223-amino-acid chain: Probable GTP-binding protein EngB (223 aa).

One can recognise an EngB-type G domain in the interval 25–199 (TGVEIAFAGR…SRLLQDWFDE (175 aa)). GTP is bound by residues 33–40 (GRSNAGKS), 60–64 (GRTQH), 78–81 (DLPG), 145–148 (TKAD), and 178–180 (FSS). Positions 40 and 62 each coordinate Mg(2+).

The protein belongs to the TRAFAC class TrmE-Era-EngA-EngB-Septin-like GTPase superfamily. EngB GTPase family. Mg(2+) serves as cofactor.

Functionally, necessary for normal cell division and for the maintenance of normal septation. The chain is Probable GTP-binding protein EngB from Nitrosomonas eutropha (strain DSM 101675 / C91 / Nm57).